A 113-amino-acid polypeptide reads, in one-letter code: Cytochrome c (113 aa).

Heme c-binding residues include Cys21, Cys24, His25, and Met90.

It belongs to the cytochrome c family. In terms of processing, binds 1 heme c group covalently per subunit.

The protein resides in the mitochondrion intermembrane space. Its function is as follows. Electron carrier protein. The oxidized form of the cytochrome c heme group can accept an electron from the heme group of the cytochrome c1 subunit of cytochrome reductase. Cytochrome c then transfers this electron to the cytochrome oxidase complex, the final protein carrier in the mitochondrial electron-transport chain. The polypeptide is Cytochrome c (cytC) (Dictyostelium discoideum (Social amoeba)).